A 303-amino-acid chain; its full sequence is Acetaldehyde dehydrogenase (303 aa).

Cys-131 functions as the Acyl-thioester intermediate in the catalytic mechanism. NAD(+) contacts are provided by residues Ser-162 to Asn-170 and Asn-273.

Belongs to the acetaldehyde dehydrogenase family.

It carries out the reaction acetaldehyde + NAD(+) + CoA = acetyl-CoA + NADH + H(+). This chain is Acetaldehyde dehydrogenase, found in Marinomonas sp. (strain MWYL1).